A 595-amino-acid chain; its full sequence is UvrABC system protein C (595 aa).

One can recognise a GIY-YIG domain in the interval 17-94 (FEPGCYLMKD…IKQYQPRYNI (78 aa)). Residues 199-234 (KTIIKNLESRMQAASENLEFEQAKEYRDLIQNIHNL) enclose the UVR domain.

It belongs to the UvrC family. Interacts with UvrB in an incision complex.

Its subcellular location is the cytoplasm. Functionally, the UvrABC repair system catalyzes the recognition and processing of DNA lesions. UvrC both incises the 5' and 3' sides of the lesion. The N-terminal half is responsible for the 3' incision and the C-terminal half is responsible for the 5' incision. This chain is UvrABC system protein C, found in Staphylococcus carnosus (strain TM300).